Reading from the N-terminus, the 49-residue chain is Chitin-binding lectin (49 aa).

The Chitin-binding type-1 domain maps to 2–45 (DHRCGREATPPGKLCNDGRCCSQWGWCGTTQAYCSGKCQSQCDC). 4 cysteine pairs are disulfide-bonded: C5–C22, C16–C28, C21–C35, and C39–C43.

Homodimer; disulfide-linked.

Its function is as follows. Chitin-binding lectin which is specific for N-acetylglucosamine oligomers. The polypeptide is Chitin-binding lectin (Viscum album (European mistletoe)).